Here is a 244-residue protein sequence, read N- to C-terminus: Small ribosomal subunit protein uS2 (244 aa).

The protein belongs to the universal ribosomal protein uS2 family.

The polypeptide is Small ribosomal subunit protein uS2 (Exiguobacterium sibiricum (strain DSM 17290 / CCUG 55495 / CIP 109462 / JCM 13490 / 255-15)).